Reading from the N-terminus, the 248-residue chain is ATP synthase subunit a, chloroplastic (248 aa).

5 helical membrane passes run G37 to G57, V96 to V116, I135 to H155, L200 to L220, and G221 to G241.

Belongs to the ATPase A chain family. F-type ATPases have 2 components, CF(1) - the catalytic core - and CF(0) - the membrane proton channel. CF(1) has five subunits: alpha(3), beta(3), gamma(1), delta(1), epsilon(1). CF(0) has four main subunits: a, b, b' and c.

The protein resides in the plastid. Its subcellular location is the chloroplast thylakoid membrane. Its function is as follows. Key component of the proton channel; it plays a direct role in the translocation of protons across the membrane. This chain is ATP synthase subunit a, chloroplastic, found in Staurastrum punctulatum (Green alga).